The sequence spans 888 residues: MNSVNSIRSTFLDYFHLNGHKVLSSSPLVPRNDPTLMFTNAGMVQFKNVFTGLEQRPCKQATTAQKCVRVGGKHNDLDNVGYTARHHTFFEMLGNFSFSDYFKEEAIFLSWNLLTKEFCLPKDKLLVTVYHSDDVAAELWRKISNLSDEKIVRIATVDNFWAMGETGPCGPCSEIFYDHGDEIWGGPPGSANEGGDRFIEIWNLVFMQYEQVSKEERVELPHPSIDTGMGLERIAAVLQGVHDNYDIDLFRALIGASQEITGVEATGDFIASHRVISDHLRSCAFLIADGVLPSNEGRGYVLRRIMRRAMRHAHFLGVKEPLMWRLLPVLVREMGQAYPELVRAESLISETLKLEEMRFRKTLERGLGLLNEASSNLKEGDHFNGEIAFKLYDTYGFPLDLTQDALRCRGISVDVDAFDKAMQRQKTEARANWSGSGEAVTETIWFAVRDRVGATEFLGYEIEKAEGIITALICDGKVVDHISSGQKAIIVVNQTPFYGESGGQIGDSGIISSGCFVFEVHDTQKKSNGVFIHIGEVKSGQAKTFECVELTVDVVRRQKIRANHSATHLLHEALRQILGPHVTQKGSLVLPDRLRFDFSHPKSVSSEELKKIEDLANDIVLQNSEVTTHLMALDDAISEGAMALFGEKYGDEVRVVSMGNPLEPEGLKKRWSIELCGGTHVERTGDIGLIHIVSESSVAAGVRRIEALTGTAARLYFNRQDERIREISSLLKTVPADVGERVSNLLHEYNRLSQACIELRKKIILSGNTIKNNQEDITIINGISFMGRVVRNILPRDLKALVDDGKKQIGSGVVAFISVAENGKGSAVVGVTNDLTDKLNAVNLIHILSDVLGGKGGGGRPDMAQSGGPEGDKAVGALAALRASLEKI.

The Zn(2+) site is built by His564, His568, Cys676, and His680.

It belongs to the class-II aminoacyl-tRNA synthetase family. The cofactor is Zn(2+).

It is found in the cytoplasm. The catalysed reaction is tRNA(Ala) + L-alanine + ATP = L-alanyl-tRNA(Ala) + AMP + diphosphate. Catalyzes the attachment of alanine to tRNA(Ala) in a two-step reaction: alanine is first activated by ATP to form Ala-AMP and then transferred to the acceptor end of tRNA(Ala). Also edits incorrectly charged Ser-tRNA(Ala) and Gly-tRNA(Ala) via its editing domain. The sequence is that of Alanine--tRNA ligase from Bartonella quintana (strain Toulouse) (Rochalimaea quintana).